The following is a 67-amino-acid chain: Probable Sec-independent protein translocase protein TatE (67 aa).

Residues isoleucine 4–glycine 21 traverse the membrane as a helical segment. Positions methionine 43–glutamate 67 are disordered.

This sequence belongs to the TatA/E family. TatE subfamily.

The protein localises to the cell inner membrane. Its function is as follows. Part of the twin-arginine translocation (Tat) system that transports large folded proteins containing a characteristic twin-arginine motif in their signal peptide across membranes. TatE shares overlapping functions with TatA. The protein is Probable Sec-independent protein translocase protein TatE of Enterobacter lignolyticus (strain SCF1).